A 326-amino-acid polypeptide reads, in one-letter code: MCPLTLQVTGLMNVSEPNSSFAFVNEFILQGFTCEWTIQIFLFSLFTTTYALTITGNGAIAFVLWCDWRLHTPMYMFLGNFSFLEIWYVSSTVPKMLVNFLSEKKNISFAGCFLQFYFFFSLGTSECLLLTVMAFDQYLAICRPLLYPNIMTGHLCAKLVILCWVCGFLWFLIPIVLISQMPFCGPNIIDHVVCDPGPRFALDCVSAPRIQLFCYTLSSLVIFGNFLFIIGSYTLVLKAVLGMPSSTGRHKAFSTCGSHLAVVSLCYSSLMVMYVSPGLGHSTGMQKIETLFYAMVTPLFNPLIYSLQNKEIKAALRKVLGSSNII.

Residues 1–44 (MCPLTLQVTGLMNVSEPNSSFAFVNEFILQGFTCEWTIQIFLFS) are Extracellular-facing. N13 and N18 each carry an N-linked (GlcNAc...) asparagine glycan. The chain crosses the membrane as a helical span at residues 45–65 (LFTTTYALTITGNGAIAFVLW). Residues 66–72 (CDWRLHT) are Cytoplasmic-facing. The helical transmembrane segment at 73 to 93 (PMYMFLGNFSFLEIWYVSSTV) threads the bilayer. The Extracellular portion of the chain corresponds to 94-112 (PKMLVNFLSEKKNISFAGC). A glycan (N-linked (GlcNAc...) asparagine) is linked at N106. A disulfide bridge connects residues C112 and C194. Residues 113–133 (FLQFYFFFSLGTSECLLLTVM) traverse the membrane as a helical segment. Residues 134-158 (AFDQYLAICRPLLYPNIMTGHLCAK) are Cytoplasmic-facing. The helical transmembrane segment at 159–179 (LVILCWVCGFLWFLIPIVLIS) threads the bilayer. Over 180-216 (QMPFCGPNIIDHVVCDPGPRFALDCVSAPRIQLFCYT) the chain is Extracellular. The chain crosses the membrane as a helical span at residues 217–237 (LSSLVIFGNFLFIIGSYTLVL). The Cytoplasmic portion of the chain corresponds to 238–259 (KAVLGMPSSTGRHKAFSTCGSH). Residues 260–280 (LAVVSLCYSSLMVMYVSPGLG) traverse the membrane as a helical segment. The Extracellular segment spans residues 281–287 (HSTGMQK). Residues 288–308 (IETLFYAMVTPLFNPLIYSLQ) form a helical membrane-spanning segment. Residues 309–326 (NKEIKAALRKVLGSSNII) lie on the Cytoplasmic side of the membrane.

The protein belongs to the G-protein coupled receptor 1 family.

The protein resides in the cell membrane. Odorant receptor. In Homo sapiens (Human), this protein is Olfactory receptor 11H12 (OR11H12).